Consider the following 264-residue polypeptide: Major prion protein (264 aa).

Positions 1–24 are cleaved as a signal peptide; that stretch reads MVKSHIGSWILVLFVAMWSDVGLC. Residues 25-241 form an interaction with GRB2, ERI3 and SYN1 region; the sequence is KKRPKPGGGW…ESQAYYQRGA (217 aa). Positions 28–118 are disordered; that stretch reads PKPGGGWNTG…QWNKPSKPKT (91 aa). Residues 37-54 are compositionally biased toward low complexity; sequence GGSRYPGPGSPGGNRYPP. A run of 6 repeats spans residues 54 to 62, 63 to 70, 71 to 78, 79 to 86, 87 to 94, and 95 to 103. The interval 54 to 103 is 6 X 8 AA tandem repeats of P-H-G-G-G-W-G-Q; that stretch reads PQGGGGWGQPHGGGWGQPHGGGWGQPHGGGWGQPHGGGWGQPHGGGGWGQ. Residues 55–107 show a composition bias toward gly residues; it reads QGGGGWGQPHGGGWGQPHGGGWGQPHGGGWGQPHGGGWGQPHGGGGWGQGGTH. Cu(2+)-binding residues include His72, Gly73, Gly74, His80, Gly81, Gly82, His88, Gly89, Gly90, His96, and Gly98. A disulfide bridge links Cys190 with Cys225. Asn192 and Asn208 each carry an N-linked (GlcNAc...) asparagine glycan. Ala241 is lipidated: GPI-anchor amidated alanine. The propeptide at 242 to 264 is removed in mature form; the sequence is SVILFSSPPVILLISFLIFLIVG.

The protein belongs to the prion family. In terms of assembly, monomer and homodimer. Has a tendency to aggregate into amyloid fibrils containing a cross-beta spine, formed by a steric zipper of superposed beta-strands. Soluble oligomers may represent an intermediate stage on the path to fibril formation. Copper binding may promote oligomerization. Interacts with GRB2, APP, ERI3/PRNPIP and SYN1. Mislocalized cytosolically exposed PrP interacts with MGRN1; this interaction alters MGRN1 subcellular location and causes lysosomal enlargement. Interacts with KIAA1191.

The protein resides in the cell membrane. Its subcellular location is the golgi apparatus. Its primary physiological function is unclear. Has cytoprotective activity against internal or environmental stresses. May play a role in neuronal development and synaptic plasticity. May be required for neuronal myelin sheath maintenance. May play a role in iron uptake and iron homeostasis. Soluble oligomers are toxic to cultured neuroblastoma cells and induce apoptosis (in vitro). Association with GPC1 (via its heparan sulfate chains) targets PRNP to lipid rafts. Also provides Cu(2+) or Zn(2+) for the ascorbate-mediated GPC1 deaminase degradation of its heparan sulfate side chains. In Ailuropoda melanoleuca (Giant panda), this protein is Major prion protein (PRNP).